We begin with the raw amino-acid sequence, 299 residues long: Protoheme IX farnesyltransferase (299 aa).

A run of 8 helical transmembrane segments spans residues 25–45, 51–71, 97–117, 119–139, 147–167, 173–193, 225–245, and 275–295; these read IVSL…PDLA, LFGT…NHLI, ALAF…FLVN, LTAW…TAFL, IVLG…AVTG, AFLL…ALAL, FLLF…LLYL, and FGYS…DHYL.

It belongs to the UbiA prenyltransferase family. Protoheme IX farnesyltransferase subfamily.

It is found in the cell inner membrane. The enzyme catalyses heme b + (2E,6E)-farnesyl diphosphate + H2O = Fe(II)-heme o + diphosphate. It functions in the pathway porphyrin-containing compound metabolism; heme O biosynthesis; heme O from protoheme: step 1/1. Functionally, converts heme B (protoheme IX) to heme O by substitution of the vinyl group on carbon 2 of heme B porphyrin ring with a hydroxyethyl farnesyl side group. This is Protoheme IX farnesyltransferase from Nitrosococcus oceani (strain ATCC 19707 / BCRC 17464 / JCM 30415 / NCIMB 11848 / C-107).